We begin with the raw amino-acid sequence, 138 residues long: Transcription antitermination protein NusB (138 aa).

Belongs to the NusB family.

Functionally, involved in transcription antitermination. Required for transcription of ribosomal RNA (rRNA) genes. Binds specifically to the boxA antiterminator sequence of the ribosomal RNA (rrn) operons. The polypeptide is Transcription antitermination protein NusB (Helicobacter pylori (strain G27)).